Here is a 560-residue protein sequence, read N- to C-terminus: Membrane protein insertase YidC (560 aa).

A run of 6 helical transmembrane segments spans residues 5 to 25 (IINL…WQYF), 334 to 354 (AIDF…MNFF), 357 to 377 (YVGN…LLMF), 431 to 451 (LPIL…YVTI), 476 to 496 (LFGL…WPIL), and 522 to 542 (FMPL…LIYW).

The protein belongs to the OXA1/ALB3/YidC family. Type 1 subfamily. Interacts with the Sec translocase complex via SecD. Specifically interacts with transmembrane segments of nascent integral membrane proteins during membrane integration.

The protein localises to the cell inner membrane. Functionally, required for the insertion and/or proper folding and/or complex formation of integral membrane proteins into the membrane. Involved in integration of membrane proteins that insert both dependently and independently of the Sec translocase complex, as well as at least some lipoproteins. Aids folding of multispanning membrane proteins. The protein is Membrane protein insertase YidC of Rickettsia conorii (strain ATCC VR-613 / Malish 7).